A 436-amino-acid chain; its full sequence is Glutamyl-tRNA reductase 2 (436 aa).

Substrate is bound by residues 49–52 (TCNR), Ser106, 111–113 (EPQ), and Gln117. Cys50 functions as the Nucleophile in the catalytic mechanism. 186–191 (GAGKMC) is an NADP(+) binding site.

The protein belongs to the glutamyl-tRNA reductase family. In terms of assembly, homodimer.

It carries out the reaction (S)-4-amino-5-oxopentanoate + tRNA(Glu) + NADP(+) = L-glutamyl-tRNA(Glu) + NADPH + H(+). It participates in porphyrin-containing compound metabolism; protoporphyrin-IX biosynthesis; 5-aminolevulinate from L-glutamyl-tRNA(Glu): step 1/2. Functionally, catalyzes the NADPH-dependent reduction of glutamyl-tRNA(Glu) to glutamate 1-semialdehyde (GSA). This Koribacter versatilis (strain Ellin345) protein is Glutamyl-tRNA reductase 2.